We begin with the raw amino-acid sequence, 705 residues long: uncharacterized protein (705 aa).

Active-site charge relay system residues include S554 and H676.

It belongs to the peptidase S9A family.

This is an uncharacterized protein from Sinorhizobium fredii (strain NBRC 101917 / NGR234).